The following is a 269-amino-acid chain: 5'-nucleotidase SurE (269 aa).

4 residues coordinate a divalent metal cation: Asp-11, Asp-12, Ser-43, and Asn-101.

This sequence belongs to the SurE nucleotidase family. A divalent metal cation serves as cofactor.

The protein localises to the cytoplasm. It catalyses the reaction a ribonucleoside 5'-phosphate + H2O = a ribonucleoside + phosphate. Its function is as follows. Nucleotidase that shows phosphatase activity on nucleoside 5'-monophosphates. In Prochlorococcus marinus (strain MIT 9301), this protein is 5'-nucleotidase SurE.